A 369-amino-acid polypeptide reads, in one-letter code: Phospho-N-acetylmuramoyl-pentapeptide-transferase (369 aa).

10 helical membrane-spanning segments follow: residues 2-22 (IALL…TPLF), 55-75 (TVVV…MWMM), 86-106 (ALLL…DDFI), 122-142 (LVLQ…FPNA), 158-178 (IPWL…FVLW), 196-216 (LDGL…LMGI), 239-259 (PLDL…FLWW), 266-286 (IFMG…FAIL), 291-311 (LLLA…IIQV), and 348-368 (ILGG…WVVL).

Belongs to the glycosyltransferase 4 family. MraY subfamily. Mg(2+) serves as cofactor.

Its subcellular location is the cell membrane. The catalysed reaction is UDP-N-acetyl-alpha-D-muramoyl-L-alanyl-gamma-D-glutamyl-meso-2,6-diaminopimeloyl-D-alanyl-D-alanine + di-trans,octa-cis-undecaprenyl phosphate = di-trans,octa-cis-undecaprenyl diphospho-N-acetyl-alpha-D-muramoyl-L-alanyl-D-glutamyl-meso-2,6-diaminopimeloyl-D-alanyl-D-alanine + UMP. It participates in cell wall biogenesis; peptidoglycan biosynthesis. Functionally, catalyzes the initial step of the lipid cycle reactions in the biosynthesis of the cell wall peptidoglycan: transfers peptidoglycan precursor phospho-MurNAc-pentapeptide from UDP-MurNAc-pentapeptide onto the lipid carrier undecaprenyl phosphate, yielding undecaprenyl-pyrophosphoryl-MurNAc-pentapeptide, known as lipid I. The chain is Phospho-N-acetylmuramoyl-pentapeptide-transferase from Arthrobacter sp. (strain FB24).